A 51-amino-acid polypeptide reads, in one-letter code: uncharacterized protein (51 aa).

Residues 1 to 51 (MARTNVKLCPPKRSKRPSNSRSKSTSHSNRRSLNSLRRTRTSRRSNNGKFT) are disordered. Over residues 19–36 (NSRSKSTSHSNRRSLNSL) the composition is skewed to low complexity.

This is an uncharacterized protein from Bdellovibrio bacteriovorus (Bacteriophage phiMH2K).